Here is a 404-residue protein sequence, read N- to C-terminus: Phosphoglycerate kinase (404 aa).

Substrate contacts are provided by residues aspartate 21–asparagine 23, arginine 38, histidine 61–arginine 64, arginine 126, and arginine 159. Residues lysine 210, glutamate 333, and glycine 360–serine 363 each bind ATP.

The protein belongs to the phosphoglycerate kinase family. Monomer.

Its subcellular location is the cytoplasm. It carries out the reaction (2R)-3-phosphoglycerate + ATP = (2R)-3-phospho-glyceroyl phosphate + ADP. Its pathway is carbohydrate degradation; glycolysis; pyruvate from D-glyceraldehyde 3-phosphate: step 2/5. This chain is Phosphoglycerate kinase, found in Acidobacterium capsulatum (strain ATCC 51196 / DSM 11244 / BCRC 80197 / JCM 7670 / NBRC 15755 / NCIMB 13165 / 161).